A 271-amino-acid chain; its full sequence is Structure-specific endonuclease subunit SLX1 (271 aa).

One can recognise a GIY-YIG domain in the interval 9–94 (RFFGVYLLYC…PQASRRLTHV (86 aa)). Residues 182–234 (CTLCARMLQDEEGPLCCPHPGCPLRAHIICLAEEFLQEEPGQLLPLEGHCPSC) form an SLX1-type zinc finger.

Belongs to the SLX1 family. Forms a heterodimer with SLX4. The cofactor is a divalent metal cation.

It localises to the nucleus. In terms of biological role, catalytic subunit of the SLX1-SLX4 structure-specific endonuclease that resolves DNA secondary structures generated during DNA repair and recombination. Has endonuclease activity towards branched DNA substrates, introducing single-strand cuts in duplex DNA close to junctions with ss-DNA. Has a preference for 5'-flap structures, and promotes symmetrical cleavage of static and migrating Holliday junctions (HJs). Resolves HJs by generating two pairs of ligatable, nicked duplex products. The sequence is that of Structure-specific endonuclease subunit SLX1 (Slx1b) from Rattus norvegicus (Rat).